The following is a 146-amino-acid chain: Large ribosomal subunit protein uL15 (146 aa).

The interval 1-62 (MRLHELRPKT…GQMPLQERLP (62 aa)) is disordered. The segment covering 10–21 (TNYKKSRKRKGR) has biased composition (basic residues). Residues 42–52 (TGGGVRPGFEG) are compositionally biased toward gly residues.

It belongs to the universal ribosomal protein uL15 family. As to quaternary structure, part of the 50S ribosomal subunit.

In terms of biological role, binds to the 23S rRNA. This Natranaerobius thermophilus (strain ATCC BAA-1301 / DSM 18059 / JW/NM-WN-LF) protein is Large ribosomal subunit protein uL15.